The primary structure comprises 88 residues: Small ribosomal subunit protein bS20 (88 aa).

The disordered stretch occupies residues 1 to 28; the sequence is MANTSSAKKATRKIARRTAVNKSRRTQM.

Its function is as follows. Binds directly to 16S ribosomal RNA. The protein is Small ribosomal subunit protein bS20 of Rhodopseudomonas palustris (strain ATCC BAA-98 / CGA009).